Reading from the N-terminus, the 489-residue chain is Protein LMBR1L (489 aa).

Topologically, residues 1 to 21 are extracellular; the sequence is MEAPDYEVLSVREQLFHERIR. Residues 1–59 form an interaction with LGB region; sequence MEAPDYEVLSVREQLFHERIRECIISTLLFATLYILCHIFLTRFKKPAEFTTVDDEDAT. The tract at residues 1–76 is LCN1-binding; it reads MEAPDYEVLS…LCTFTLAIAL (76 aa). A helical membrane pass occupies residues 22-42; the sequence is ECIISTLLFATLYILCHIFLT. The Cytoplasmic portion of the chain corresponds to 43–66; sequence RFKKPAEFTTVDDEDATVNKIALE. A helical transmembrane segment spans residues 67-87; that stretch reads LCTFTLAIALGAVLLLPFSII. The Extracellular portion of the chain corresponds to 88 to 114; sequence SNEVLLSLPRNYYIQWLNGSLIHGLWN. A helical transmembrane segment spans residues 115 to 135; it reads LVFLFSNLSLIFLMPFAYFFT. Over 136-154 the chain is Cytoplasmic; sequence ESEGFAGSRKGVLGRVYET. A helical transmembrane segment spans residues 155-175; sequence VVMLMLLTLLVLGMVWVASAI. The Extracellular portion of the chain corresponds to 176 to 196; sequence VDKNKANRESLYDFWEYYLPY. The helical transmembrane segment at 197–217 threads the bilayer; sequence LYSCISFLGVLLLLVCTPLGL. The Cytoplasmic segment spans residues 218 to 305; it reads ARMFSVTGKL…NLGYPLAMLC (88 aa). A helical transmembrane segment spans residues 306–326; sequence LLVLTGLSVLIVAIHILELLI. The Extracellular portion of the chain corresponds to 327–350; the sequence is DEAAMPRGMQGTSLGQVSFSKLGS. A helical membrane pass occupies residues 351-371; it reads FGAVIQVVLIFYLMVSSVVGF. The Cytoplasmic portion of the chain corresponds to 372-388; the sequence is YSSPLFRSLRPRWHDTA. Residues 389–409 traverse the membrane as a helical segment; the sequence is MTQIIGNCVCLLVLSSALPVF. The Extracellular segment spans residues 410–431; it reads SRTLGLTRFDLLGDFGRFNWLG. The chain crosses the membrane as a helical span at residues 432 to 452; the sequence is NFYIVFLYNAAFAGLTTLCLV. The Cytoplasmic segment spans residues 453–489; it reads KTFTAAVRAELIRAFGLDRLPLPVSGFPQASRKTQHQ.

This sequence belongs to the LIMR family. As to quaternary structure, dimer. Can also form higher oligomers. Interacts with LCN1; this interaction mediates the endocytosis of LCN1. Interacts with UBAC2, FAF2, VCP, AMFR, ZNRF3, CTNNB1, LRP6, GSK3A and GSK3B. Interacts with DVL2 and RNF43. Interaction with SCGB1A1 has been observed in PubMed:16423471, but not in PubMed:23964685. Interaction with LGB which mediates the endocytosis of LGB has been observed in PubMed:17991420, but not in PubMed:23964685. In terms of tissue distribution, expressed in testis, pituitary gland, adrenal gland, trachea, placenta, thymus, cerebellum, stomach, mammary gland, spinal cord. A weaker expression is detected in colon, pancreas, and prostate.

It localises to the cell membrane. Its subcellular location is the endoplasmic reticulum membrane. In terms of biological role, plays an essential role in lymphocyte development by negatively regulating the canonical Wnt signaling pathway. In association with UBAC2 and E3 ubiquitin-protein ligase AMFR, promotes the ubiquitin-mediated degradation of CTNNB1 and Wnt receptors FZD6 and LRP6. LMBR1L stabilizes the beta-catenin destruction complex that is required for regulating CTNNB1 levels. Acts as a LCN1 receptor and can mediate its endocytosis. In Homo sapiens (Human), this protein is Protein LMBR1L (LMBR1L).